We begin with the raw amino-acid sequence, 144 residues long: Large ribosomal subunit protein uL15 (144 aa).

The tract at residues 1-48 (MQLNNLKPADGSKHAKRRVGRGIGSGLGKTAGRGHKGQKSRSGGFHKV) is disordered. The segment covering 21–31 (RGIGSGLGKTA) has biased composition (gly residues).

Belongs to the universal ribosomal protein uL15 family. As to quaternary structure, part of the 50S ribosomal subunit.

Functionally, binds to the 23S rRNA. The protein is Large ribosomal subunit protein uL15 of Cupriavidus metallidurans (strain ATCC 43123 / DSM 2839 / NBRC 102507 / CH34) (Ralstonia metallidurans).